The chain runs to 580 residues: Putative Xaa-Pro dipeptidyl-peptidase (580 aa).

Catalysis depends on charge relay system residues Ser-207, Asp-319, and His-350.

The protein belongs to the peptidase S15 family.

The enzyme catalyses Hydrolyzes Xaa-Pro-|- bonds to release unblocked, N-terminal dipeptides from substrates including Ala-Pro-|-p-nitroanilide and (sequentially) Tyr-Pro-|-Phe-Pro-|-Gly-Pro-|-Ile.. The sequence is that of Putative Xaa-Pro dipeptidyl-peptidase from Bacillus cereus (strain ATCC 14579 / DSM 31 / CCUG 7414 / JCM 2152 / NBRC 15305 / NCIMB 9373 / NCTC 2599 / NRRL B-3711).